The sequence spans 561 residues: DNA ligase (561 aa).

Glu-247 contributes to the ATP binding site. Residue Lys-249 is the N6-AMP-lysine intermediate of the active site. Positions 254, 269, 299, 339, 414, and 420 each coordinate ATP.

Belongs to the ATP-dependent DNA ligase family. Monomer. The cofactor is Mg(2+).

It carries out the reaction ATP + (deoxyribonucleotide)n-3'-hydroxyl + 5'-phospho-(deoxyribonucleotide)m = (deoxyribonucleotide)n+m + AMP + diphosphate.. In terms of biological role, DNA ligase that seals nicks in double-stranded DNA during DNA replication, DNA recombination and DNA repair. This chain is DNA ligase, found in Pyrococcus furiosus (strain ATCC 43587 / DSM 3638 / JCM 8422 / Vc1).